A 91-amino-acid polypeptide reads, in one-letter code: Acylphosphatase (91 aa).

An Acylphosphatase-like domain is found at 5–91 (CLHAYVGGRV…QGIAGFVVRR (87 aa)). Residues Arg-20 and Asn-38 contribute to the active site.

The protein belongs to the acylphosphatase family.

It carries out the reaction an acyl phosphate + H2O = a carboxylate + phosphate + H(+). This is Acylphosphatase (acyP) from Pseudomonas aeruginosa (strain ATCC 15692 / DSM 22644 / CIP 104116 / JCM 14847 / LMG 12228 / 1C / PRS 101 / PAO1).